We begin with the raw amino-acid sequence, 1059 residues long: Probable sucrose-phosphate synthase (1059 aa).

Disordered regions lie at residues 95–145, 671–695, 710–731, and 748–769; these read AVQR…VKSR, RHPQWQRSEDGGESSESEESPGDSL, DGERSGDSGNDNSLDPDGNATD, and SKDTRRGGATEKSGQNSNASKF. Over residues 102-114 the composition is skewed to basic and acidic residues; that stretch reads RRLERERGRREAT. Acidic residues predominate over residues 681–691; it reads GGESSESEESP.

This sequence belongs to the glycosyltransferase 1 family. In terms of assembly, homodimer or homotetramer.

It carries out the reaction beta-D-fructose 6-phosphate + UDP-alpha-D-glucose = sucrose 6(F)-phosphate + UDP + H(+). Its pathway is glycan biosynthesis; sucrose biosynthesis; sucrose from D-fructose 6-phosphate and UDP-alpha-D-glucose: step 1/2. Its activity is regulated as follows. Activity is regulated by phosphorylation and moderated by concentration of metabolites and light. Its function is as follows. Plays a role in photosynthetic sucrose synthesis by catalyzing the rate-limiting step of sucrose biosynthesis from UDP-glucose and fructose- 6-phosphate. Involved in the regulation of carbon partitioning in the leaves of plants. May regulate the synthesis of sucrose and therefore play a major role as a limiting factor in the export of photoassimilates out of the leaf. Plays a role for sucrose availability that is essential for plant growth and fiber elongation. The polypeptide is Probable sucrose-phosphate synthase (SPS) (Vicia faba (Broad bean)).